Consider the following 279-residue polypeptide: 3-methyl-2-oxobutanoate hydroxymethyltransferase (279 aa).

Mg(2+)-binding residues include aspartate 44 and aspartate 83. Residues 44–45 (DS), aspartate 83, and lysine 113 each bind 3-methyl-2-oxobutanoate. Position 115 (glutamate 115) interacts with Mg(2+). The active-site Proton acceptor is the glutamate 182.

Belongs to the PanB family. Homodecamer; pentamer of dimers. Mg(2+) is required as a cofactor.

It localises to the cytoplasm. The enzyme catalyses 3-methyl-2-oxobutanoate + (6R)-5,10-methylene-5,6,7,8-tetrahydrofolate + H2O = 2-dehydropantoate + (6S)-5,6,7,8-tetrahydrofolate. It functions in the pathway cofactor biosynthesis; (R)-pantothenate biosynthesis; (R)-pantoate from 3-methyl-2-oxobutanoate: step 1/2. Its function is as follows. Catalyzes the reversible reaction in which hydroxymethyl group from 5,10-methylenetetrahydrofolate is transferred onto alpha-ketoisovalerate to form ketopantoate. This chain is 3-methyl-2-oxobutanoate hydroxymethyltransferase, found in Dehalococcoides mccartyi (strain CBDB1).